The sequence spans 446 residues: tRNA modification GTPase MnmE (446 aa).

Arginine 24, glutamate 81, and lysine 120 together coordinate (6S)-5-formyl-5,6,7,8-tetrahydrofolate. A TrmE-type G domain is found at glycine 216–leucine 368. Asparagine 226 is a K(+) binding site. GTP contacts are provided by residues asparagine 226–serine 231, threonine 245–threonine 251, and aspartate 270–glycine 273. Serine 230 serves as a coordination point for Mg(2+). Residues threonine 245, valine 247, and threonine 250 each coordinate K(+). Threonine 251 contributes to the Mg(2+) binding site. A (6S)-5-formyl-5,6,7,8-tetrahydrofolate-binding site is contributed by lysine 446.

Belongs to the TRAFAC class TrmE-Era-EngA-EngB-Septin-like GTPase superfamily. TrmE GTPase family. In terms of assembly, homodimer. Heterotetramer of two MnmE and two MnmG subunits. Requires K(+) as cofactor.

It localises to the cytoplasm. Exhibits a very high intrinsic GTPase hydrolysis rate. Involved in the addition of a carboxymethylaminomethyl (cmnm) group at the wobble position (U34) of certain tRNAs, forming tRNA-cmnm(5)s(2)U34. The protein is tRNA modification GTPase MnmE of Xanthomonas campestris pv. campestris (strain B100).